Consider the following 20-residue polypeptide: Lysozyme (20 aa).

Monomer.

The protein localises to the secreted. The enzyme catalyses Hydrolysis of (1-&gt;4)-beta-linkages between N-acetylmuramic acid and N-acetyl-D-glucosamine residues in a peptidoglycan and between N-acetyl-D-glucosamine residues in chitodextrins.. Has bacteriolytic activity. The sequence is that of Lysozyme from Lysobacter sp. (strain XL1).